We begin with the raw amino-acid sequence, 270 residues long: Allergen Asp f 7 (270 aa).

Positions 1-21 (MAPIFKSLALVSALFAAISSA) are cleaved as a signal peptide. Disordered regions lie at residues 53-97 (YPTP…QPTQ) and 113-167 (ADSA…GPCS). The segment covering 63-81 (VVESTPTPTPSAAPEQAEP) has biased composition (low complexity). Polar residues predominate over residues 83-97 (ETSTQPETTKSQPTQ). Over residues 127-149 (PATTAAPSTSTTTQAAPSAPPAA) the composition is skewed to low complexity. A compositionally biased stretch (polar residues) spans 150 to 162 (NSGSTEKAASSGY).

The sequence is that of Allergen Asp f 7 from Aspergillus fumigatus (strain ATCC MYA-4609 / CBS 101355 / FGSC A1100 / Af293) (Neosartorya fumigata).